The sequence spans 154 residues: Ribonuclease H (154 aa).

An RNase H type-1 domain is found at methionine 1–glutamate 141. Positions 9, 47, 69, and 133 each coordinate Mg(2+).

This sequence belongs to the RNase H family. Monomer. Mg(2+) is required as a cofactor.

It is found in the cytoplasm. It carries out the reaction Endonucleolytic cleavage to 5'-phosphomonoester.. Functionally, endonuclease that specifically degrades the RNA of RNA-DNA hybrids. In Brucella abortus (strain 2308), this protein is Ribonuclease H.